Here is a 338-residue protein sequence, read N- to C-terminus: Acyl-CoA Delta(11) desaturase (338 aa).

The next 2 membrane-spanning stretches (helical) occupy residues 33–53 (IVYFNIITFAYWHIAGLYGLY) and 61–81 (WATVLFSFFLFVVAEVGVTAG). The short motif at 83–88 (HRLWSH) is the Histidine box-1 element. The helical transmembrane segment at 97 to 117 (LQILLMVMNSLAFQNTVIDWV) threads the bilayer. Residues 120-124 (HRLHH) carry the Histidine box-2 motif. Helical transmembrane passes span 181–201 (AIPFIGAVCFVLPTLIPVYGW) and 212–234 (AMLRYIMNLNVTFLVNSAAHIYG). The short motif at 260–264 (HNYHH) is the Histidine box-3 element. Residues 318-338 (TNLWGLEDVDTPEDLKNTKGE) are disordered.

Belongs to the fatty acid desaturase type 1 family. Requires Fe cation as cofactor. In terms of tissue distribution, detected in the pheromone gland.

The protein localises to the membrane. The enzyme catalyses an 11,12-saturated fatty acyl-CoA + 2 Fe(II)-[cytochrome b5] + O2 + 2 H(+) = an (11Z)-Delta(11)-fatty acyl-CoA + 2 Fe(III)-[cytochrome b5] + 2 H2O. Catalyzes the formation of delta(11) fatty acyl precursors in the pheromone gland, and has high activity towards palmitic acid and stearic acid. This chain is Acyl-CoA Delta(11) desaturase, found in Spodoptera littoralis (Egyptian cotton leafworm).